Reading from the N-terminus, the 479-residue chain is Flotillin-like protein 3 (479 aa).

Cys36 carries S-palmitoyl cysteine lipidation. Coiled coils occupy residues 227-251 and 306-326; these read KVKT…AALA and EYET…KQAE.

This sequence belongs to the band 7/mec-2 family. Flotillin subfamily. May be palmitoylated.

Its subcellular location is the cell membrane. The protein resides in the membrane. The protein localises to the caveola. May act as a scaffolding protein within caveolar membranes, functionally participating in formation of caveolae or caveolae-like vesicles. This chain is Flotillin-like protein 3 (FLOT3), found in Arabidopsis thaliana (Mouse-ear cress).